Reading from the N-terminus, the 212-residue chain is Ribosomal RNA small subunit methyltransferase G (212 aa).

S-adenosyl-L-methionine is bound by residues glycine 80, leucine 85, 131 to 132 (VE), and arginine 146.

Belongs to the methyltransferase superfamily. RNA methyltransferase RsmG family.

The protein resides in the cytoplasm. It carries out the reaction guanosine(527) in 16S rRNA + S-adenosyl-L-methionine = N(7)-methylguanosine(527) in 16S rRNA + S-adenosyl-L-homocysteine. Its function is as follows. Specifically methylates the N7 position of guanine in position 527 of 16S rRNA. This Azoarcus sp. (strain BH72) protein is Ribosomal RNA small subunit methyltransferase G.